Consider the following 297-residue polypeptide: Thiosulfate sulfurtransferase (297 aa).

K14 is subject to N6-acetyllysine; alternate. Residue K14 is modified to N6-succinyllysine; alternate. Positions 25–143 (LGPSLRVLDA…WLKEGHPVTS (119 aa)) constitute a Rhodanese 1 domain. O-linked (GlcNAc) serine glycosylation is present at S35. Position 38 is a phosphoserine (S38). K136 carries the N6-acetyllysine; alternate modification. N6-succinyllysine; alternate is present on K136. Residues 144-159 (EPSRPEPAVFKATLNL) are hinge. K163 is subject to N6-acetyllysine. The Rhodanese 2 domain occupies 173-288 (QSKRFQLVDS…WFRRAPPETR (116 aa)). K175 is modified (N6-acetyllysine; alternate). K175 is subject to N6-succinyllysine; alternate. Position 187 (R187) interacts with substrate. An N6-acetyllysine; alternate mark is found at K219 and K224. An N6-succinyllysine; alternate mark is found at K219 and K224. Residue K236 is modified to N6-acetyllysine. The residue at position 237 (K237) is an N6-acetyllysine; alternate. An N6-succinyllysine; alternate modification is found at K237. The active-site Cysteine persulfide intermediate is C248. K250 serves as a coordination point for substrate.

As to quaternary structure, monomer. Expressed in numerous tissues.

It is found in the mitochondrion matrix. The catalysed reaction is thiosulfate + hydrogen cyanide = thiocyanate + sulfite + 2 H(+). Functionally, together with MRPL18, acts as a mitochondrial import factor for the cytosolic 5S rRNA. Only the nascent unfolded cytoplasmic form is able to bind to the 5S rRNA. Formation of iron-sulfur complexes and cyanide detoxification. This is Thiosulfate sulfurtransferase (Tst) from Mus musculus (Mouse).